Consider the following 111-residue polypeptide: Transcription initiation factor IIA subunit 2 (111 aa).

The protein belongs to the TFIIA subunit 2 family. As to quaternary structure, TFIIA is a heterodimer of the large unprocessed subunit 1 and a small subunit gamma. It was originally believed to be a heterotrimer of an alpha, a beta and a gamma subunit. Interacts with NCOA6 general coactivator. TFIIA forms a complex with TBP.

The protein resides in the nucleus. Functionally, TFIIA is a component of the transcription machinery of RNA polymerase II and plays an important role in transcriptional activation. TFIIA in a complex with TBP mediates transcriptional activity. This chain is Transcription initiation factor IIA subunit 2 (gtf2a2), found in Paralichthys olivaceus (Bastard halibut).